A 197-amino-acid chain; its full sequence is Endoribonuclease YbeY (197 aa).

3 residues coordinate Zn(2+): His-156, His-160, and His-166.

The protein belongs to the endoribonuclease YbeY family. Zn(2+) serves as cofactor.

The protein resides in the cytoplasm. In terms of biological role, single strand-specific metallo-endoribonuclease involved in late-stage 70S ribosome quality control and in maturation of the 3' terminus of the 16S rRNA. This Cupriavidus metallidurans (strain ATCC 43123 / DSM 2839 / NBRC 102507 / CH34) (Ralstonia metallidurans) protein is Endoribonuclease YbeY.